Here is a 346-residue protein sequence, read N- to C-terminus: 3-keto-steroid reductase ERG27 (346 aa).

NADP(+) is bound by residues leucine 19, threonine 42, and lysine 48. Catalysis depends on proton donor residues serine 182 and tyrosine 205. NADP(+) contacts are provided by tyrosine 205, lysine 209, and serine 241. Catalysis depends on lysine 209, which acts as the Lowers pKa of active site Tyr. The helical transmembrane segment at phenylalanine 242–leucine 262 threads the bilayer. N-linked (GlcNAc...) asparagine glycosylation occurs at asparagine 272.

Belongs to the short-chain dehydrogenases/reductases (SDR) family. ERG27 subfamily. Heterotetramer of ERG25, ERG26, ERG27 and ERG28. ERG28 acts as a scaffold to tether ERG27 and other 4,4-demethylation-related enzymes, forming a demethylation enzyme complex, in the endoplasmic reticulum. Interacts with ERG25 and ERG28. Also interacts with ERG7, but only in lipid particles.

It is found in the endoplasmic reticulum membrane. It localises to the lipid droplet. It catalyses the reaction 3-dehydro-4alpha-methylzymosterol + NADPH + H(+) = 4alpha-methylzymosterol + NADP(+). Its pathway is steroid biosynthesis; zymosterol biosynthesis; zymosterol from lanosterol: step 5/6. Its function is as follows. 3-keto-steroid reductase; part of the third module of ergosterol biosynthesis pathway that includes the late steps of the pathway. ERG27 is a catalytic component of the C-4 demethylation complex that catalyzes the reduction of the keto group on the C-3. The third module or late pathway involves the ergosterol synthesis itself through consecutive reactions that mainly occur in the endoplasmic reticulum (ER) membrane. Firstly, the squalene synthase ERG9 catalyzes the condensation of 2 farnesyl pyrophosphate moieties to form squalene, which is the precursor of all steroids. Squalene synthase is crucial for balancing the incorporation of farnesyl diphosphate (FPP) into sterol and nonsterol isoprene synthesis. Secondly, the squalene epoxidase ERG1 catalyzes the stereospecific oxidation of squalene to (S)-2,3-epoxysqualene, which is considered to be a rate-limiting enzyme in steroid biosynthesis. Then, the lanosterol synthase ERG7 catalyzes the cyclization of (S)-2,3 oxidosqualene to lanosterol, a reaction that forms the sterol core. In the next steps, lanosterol is transformed to zymosterol through a complex process involving various demethylation, reduction and desaturation reactions. The lanosterol 14-alpha-demethylase ERG11 (also known as CYP51) catalyzes C14-demethylation of lanosterol to produce 4,4'-dimethyl cholesta-8,14,24-triene-3-beta-ol, which is critical for ergosterol biosynthesis. The C-14 reductase ERG24 reduces the C14=C15 double bond of 4,4-dimethyl-cholesta-8,14,24-trienol to produce 4,4-dimethyl-cholesta-8,24-dienol. 4,4-dimethyl-cholesta-8,24-dienol is substrate of the C-4 demethylation complex ERG25-ERG26-ERG27 in which ERG25 catalyzes the three-step monooxygenation required for the demethylation of 4,4-dimethyl and 4alpha-methylsterols, ERG26 catalyzes the oxidative decarboxylation that results in a reduction of the 3-beta-hydroxy group at the C-3 carbon to an oxo group, and ERG27 is responsible for the reduction of the keto group on the C-3. ERG28 has a role as a scaffold to help anchor ERG25, ERG26 and ERG27 to the endoplasmic reticulum and ERG29 regulates the activity of the iron-containing C4-methylsterol oxidase ERG25. Then, the sterol 24-C-methyltransferase ERG6 catalyzes the methyl transfer from S-adenosyl-methionine to the C-24 of zymosterol to form fecosterol. The C-8 sterol isomerase ERG2 catalyzes the reaction which results in unsaturation at C-7 in the B ring of sterols and thus converts fecosterol to episterol. The sterol-C5-desaturase ERG3 then catalyzes the introduction of a C-5 double bond in the B ring to produce 5-dehydroepisterol. The C-22 sterol desaturase ERG5 further converts 5-dehydroepisterol into ergosta-5,7,22,24(28)-tetraen-3beta-ol by forming the C-22(23) double bond in the sterol side chain. Finally, ergosta-5,7,22,24(28)-tetraen-3beta-ol is substrate of the C-24(28) sterol reductase ERG4 to produce ergosterol. Facilitates the association of ERG7 with lipid particles preventing its digestion in the endoplasmic reticulum and the lipid particles. The sequence is that of 3-keto-steroid reductase ERG27 from Candida albicans (strain SC5314 / ATCC MYA-2876) (Yeast).